The following is a 349-amino-acid chain: tRNA pseudouridine synthase D (349 aa).

The interval 1 to 22 (MTDAPLVTAELPGSGGSLRRSP) is disordered. The active-site Nucleophile is the aspartate 78. The region spanning 150–304 (GLPNLFGPQR…AEGTRRAARL (155 aa)) is the TRUD domain.

It belongs to the pseudouridine synthase TruD family.

The enzyme catalyses uridine(13) in tRNA = pseudouridine(13) in tRNA. In terms of biological role, responsible for synthesis of pseudouridine from uracil-13 in transfer RNAs. The chain is tRNA pseudouridine synthase D from Anaeromyxobacter sp. (strain Fw109-5).